Consider the following 252-residue polypeptide: MSRFQLEEMLRAGVHFGHLARRWCPKMKPYIFMEKNGVHIIDLQKTLVLADDALNALEAIAQTGREIMFVGTKKQAKRIISAEAERAGMPYVCERWLGGMLTNFSTIRQSIRRMNSIDRMETDGTFDMITKKERLMLVREKEKLMRILGGIATMTRLPAALFVVDIKKEHIAIKEARSLGIPIFAMVDTNCDPELVDFIIPANDDAIRSIQLMVKAVADTIVNSRELKVEQEVLAGMDEEDGDAVEGDAAGE.

This sequence belongs to the universal ribosomal protein uS2 family.

The protein is Small ribosomal subunit protein uS2 of Chlorobium phaeobacteroides (strain DSM 266 / SMG 266 / 2430).